The following is a 412-amino-acid chain: UPF0754 membrane protein MAE_37850 (412 aa).

2 consecutive transmembrane segments (helical) span residues 3–23 (LPTL…GYFT) and 387–407 (IVNL…IILI).

It belongs to the UPF0754 family.

Its subcellular location is the cell inner membrane. This is UPF0754 membrane protein MAE_37850 from Microcystis aeruginosa (strain NIES-843 / IAM M-2473).